Consider the following 885-residue polypeptide: Rho GTPase-activating protein gacFF (885 aa).

Low complexity predominate over residues 168-182 (TTTNNSNNSNSNNNN). Positions 168-187 (TTTNNSNNSNSNNNNKQYNS) are disordered. Residues 222 to 249 (LINKIQNDSEQLKLVLSQVEQQIEFLKS) are a coiled coil. One can recognise an F-box domain in the interval 348–394 (SDIFSLLPTHLTLYVFSYLEPKELLILAQVSSQWQKLAGDNLLWVRF). In terms of domain architecture, PH spans 464–571 (SSSKEGWLYK…WMILLNSIIK (108 aa)). 2 stretches are compositionally biased toward low complexity: residues 594–622 (NNVY…NNNN) and 629–648 (LPPL…SSTG). A disordered region spans residues 594–680 (NNVYINNNNN…GGGSGGNNNF (87 aa)). A Rho-GAP domain is found at 701-885 (VALSKILENQ…KYYDEIFIKK (185 aa)).

It localises to the cytoplasm. In terms of biological role, rho GTPase-activating protein involved in the signal transduction pathway. In Dictyostelium discoideum (Social amoeba), this protein is Rho GTPase-activating protein gacFF (gacFF).